The chain runs to 516 residues: 7-chloro-L-tryptophan 6-halogenase KtzR (516 aa).

FAD is bound by residues Gly6, Thr8, Ala9, Glu42, and Ala43. Lys71 is a catalytic residue. Position 195 (Val195) interacts with FAD. Thr357 and Gly358 together coordinate chloride. Ile359 is an FAD binding site.

Belongs to the flavin-dependent halogenase family. Bacterial tryptophan halogenase subfamily.

It catalyses the reaction 7-chloro-L-tryptophan + FADH2 + chloride + O2 = 6,7-dichloro-L-tryptophan + FAD + 2 H2O. Its function is as follows. Involved in the biosynthesis of kutznerides, actinomycete-derived antifungal and antimicrobial cyclic hexadepsipeptides. Together with KtzQ, catalyzes the regiospecific dichlorination of L-tryptophan (L-Trp) to produce 6,7-dichloro-L-tryptophan. KtzR catalyzes the chlorination of 7-chloro-L-tryptophan at C6 position to yield 6,7-dichloro-L-tryptophan. Can also use L-Trp as substrate and form 6-chloro-L-tryptophan, but has a 120-fold preference for 7-chloro-L-tryptophan over L-Trp. Cannot use piperazic acid or gamma,delta-dehydropiperazic acid. The chain is 7-chloro-L-tryptophan 6-halogenase KtzR from Kutzneria sp. (strain 744).